A 144-amino-acid chain; its full sequence is MAELIIVYFSSKSNNTHRFVQKLGLPAQRIPVDNRPLEVSTHYLLIVPTYAAGGSDAKGAVPKQVIRFLNNPNNRKHCKGVISSGNTNFGDTFALAGPIISQKLQVPLLHQFELLGTATDVKKVQAIFARLKHHTHDKQNKPTT.

This sequence belongs to the NrdI family.

In terms of biological role, probably involved in ribonucleotide reductase function. This is Protein NrdI from Streptococcus pyogenes serotype M4 (strain MGAS10750).